The following is a 95-amino-acid chain: uncharacterized protein (95 aa).

This is an uncharacterized protein from Schizosaccharomyces pombe (strain 972 / ATCC 24843) (Fission yeast).